A 224-amino-acid chain; its full sequence is RNA-free ribonuclease P (224 aa).

This sequence belongs to the HARP family.

The catalysed reaction is Endonucleolytic cleavage of RNA, removing 5'-extranucleotides from tRNA precursor.. RNA-free RNase P that catalyzes the removal of the 5'-leader sequence from pre-tRNA to produce the mature 5'-terminus. This is RNA-free ribonuclease P from Haloarcula marismortui (strain ATCC 43049 / DSM 3752 / JCM 8966 / VKM B-1809) (Halobacterium marismortui).